The chain runs to 229 residues: Ras-related protein Rab-33B (229 aa).

Residues asparagine 43, valine 44, glycine 45, lysine 46, threonine 47, cysteine 48, threonine 62, and threonine 65 each contribute to the GTP site. Residue threonine 47 participates in Mg(2+) binding. The Switch 1 signature appears at 56-68 (GRFPDRTEATIGV). Residues threonine 65 and aspartate 88 each contribute to the Mg(2+) site. The Switch 2 signature appears at 89–108 (TAGQERFRKSMVQHYYRNVH). Positions 91, 148, 149, 151, 179, and 180 each coordinate GTP. Residues cysteine 227 and cysteine 229 are each lipidated (S-geranylgeranyl cysteine). Cysteine 229 carries the cysteine methyl ester modification.

Belongs to the small GTPase superfamily. Rab family. Interacts (GTP- and GDP-bound forms) with ATG16L1; the complex consists of a tetramer where two RAB33B molecules bind independently one molecule of the ATG16L1 homodimer; the interaction promotes ATG12-ATG5-ATG16L1 complex recruitment to phagophores. Interacts with ATG16L2; however interaction is approximately hundred times lower than for ATG16L1. Interacts with RIC1 (via C-terminus domain); the interaction is direct with a preference for RAB33B-GTP. Interacts with RGP1. Mg(2+) serves as cofactor. Post-translationally, prenylated. As to expression, ubiquitous.

The protein resides in the golgi apparatus membrane. It localises to the golgi apparatus. It is found in the cis-Golgi network. Its subcellular location is the preautophagosomal structure membrane. It carries out the reaction GTP + H2O = GDP + phosphate + H(+). Its activity is regulated as follows. Regulated by guanine nucleotide exchange factors (GEFs) which promote the exchange of bound GDP for free GTP. Regulated by GTPase activating proteins (GAPs) such as SGSM2 which increase the GTP hydrolysis activity. Inhibited by GDP dissociation inhibitors (GDIs). The small GTPases Rab are key regulators of intracellular membrane trafficking, from the formation of transport vesicles to their fusion with membranes. Rabs cycle between an inactive GDP-bound form and an active GTP-bound form that is able to recruit to membranes different sets of downstream effectors directly responsible for vesicle formation, movement, tethering and fusion. RAB33B acts, in coordination with RAB6A, to regulate intra-Golgi retrograde trafficking. Participates in autophagosome formation by recruiting the ATG12-ATG5-ATG16L1 complex to phagophores, probably in a nucleotide-independent manner. The polypeptide is Ras-related protein Rab-33B (Mus musculus (Mouse)).